Consider the following 155-residue polypeptide: Myosin light chain alkali (155 aa).

2 consecutive EF-hand domains span residues 7 to 41 (REVE…LNLN) and 80 to 115 (GCYE…LGES).

In terms of assembly, myosin is a hexamer of 2 heavy chains and 4 light chains.

The protein is Myosin light chain alkali (Mlc1) of Drosophila simulans (Fruit fly).